The following is a 294-amino-acid chain: Phosphate import ATP-binding protein PstB (294 aa).

Polar residues predominate over residues 1 to 18 (MSETMTNQNVVNEEQPFN). The disordered stretch occupies residues 1-24 (MSETMTNQNVVNEEQPFNESKHRS). Residues 48–289 (LEVNKLKLFY…PSCKQTEDYI (242 aa)) form the ABC transporter domain. 80 to 87 (GPSGCGKS) lines the ATP pocket.

It belongs to the ABC transporter superfamily. Phosphate importer (TC 3.A.1.7) family. In terms of assembly, the complex is composed of two ATP-binding proteins (PstB), two transmembrane proteins (PstC and PstA) and a solute-binding protein (PstS).

Its subcellular location is the cell inner membrane. The catalysed reaction is phosphate(out) + ATP + H2O = ADP + 2 phosphate(in) + H(+). Part of the ABC transporter complex PstSACB involved in phosphate import. Responsible for energy coupling to the transport system. In Hahella chejuensis (strain KCTC 2396), this protein is Phosphate import ATP-binding protein PstB.